The following is a 344-amino-acid chain: MAAIELIDLKKNYGPVSAVKGINLTVADGEMIVLVGPSGCGKSTLLRMIAGLEAISSGHLRIAGSDVGHVDPADRNIAMVFQNYALYPHMTVRQNLEYGLKNRRVARGEIERRIANAASILEIGEFLERRPRQLSGGQRQRVAMGRAIVRDPAAFLFDEPLSNLDAKLRVQMRVEIRRLQRQLKTTSLYVTHDQLEAMTLADRLVVMNGGRIEQIGTPIEVYRRPETVFVAGFIGSPPMNLIDLDQLGPCQLALPRDTDVIGIRPSAINLGSGSAHDLRFDAFVELIETVGDENNVHLRIDGADKRVVASISTNQPLQEGDRISCHVGMDGLHPFNRATGRRTD.

Residues 4–234 (IELIDLKKNY…PETVFVAGFI (231 aa)) enclose the ABC transporter domain. 36–43 (GPSGCGKS) contacts ATP.

This sequence belongs to the ABC transporter superfamily. sn-glycerol-3-phosphate importer (TC 3.A.1.1.3) family. In terms of assembly, the complex is composed of two ATP-binding proteins (UgpC), two transmembrane proteins (UgpA and UgpE) and a solute-binding protein (UgpB).

It localises to the cell inner membrane. The enzyme catalyses sn-glycerol 3-phosphate(out) + ATP + H2O = sn-glycerol 3-phosphate(in) + ADP + phosphate + H(+). In terms of biological role, part of the ABC transporter complex UgpBAEC involved in sn-glycerol-3-phosphate (G3P) import. Responsible for energy coupling to the transport system. The sequence is that of sn-glycerol-3-phosphate import ATP-binding protein UgpC 2 from Rhizobium johnstonii (strain DSM 114642 / LMG 32736 / 3841) (Rhizobium leguminosarum bv. viciae).